A 92-amino-acid polypeptide reads, in one-letter code: YcgL domain-containing protein VC_1957 (92 aa).

One can recognise a YcgL domain in the interval 1 to 84 (MLCSIYKSPK…PPENLLEQHK (84 aa)). The tract at residues 69 to 92 (FLQLPPPPENLLEQHKERKARQTP) is disordered.

This Vibrio cholerae serotype O1 (strain ATCC 39315 / El Tor Inaba N16961) protein is YcgL domain-containing protein VC_1957.